The sequence spans 251 residues: UPF0246 protein TM1040_2658 (251 aa).

Belongs to the UPF0246 family.

This chain is UPF0246 protein TM1040_2658, found in Ruegeria sp. (strain TM1040) (Silicibacter sp.).